Consider the following 444-residue polypeptide: ATP-dependent protease ATPase subunit HslU (444 aa).

ATP contacts are provided by residues Ile-18, Gly-60 to Glu-65, Asp-256, Glu-322, and Arg-394.

It belongs to the ClpX chaperone family. HslU subfamily. A double ring-shaped homohexamer of HslV is capped on each side by a ring-shaped HslU homohexamer. The assembly of the HslU/HslV complex is dependent on binding of ATP.

The protein resides in the cytoplasm. Functionally, ATPase subunit of a proteasome-like degradation complex; this subunit has chaperone activity. The binding of ATP and its subsequent hydrolysis by HslU are essential for unfolding of protein substrates subsequently hydrolyzed by HslV. HslU recognizes the N-terminal part of its protein substrates and unfolds these before they are guided to HslV for hydrolysis. This chain is ATP-dependent protease ATPase subunit HslU, found in Klebsiella pneumoniae (strain 342).